The primary structure comprises 512 residues: Cytochrome P450 77A4 (512 aa).

Residues 9-29 (PTSLDFTFFAIIISGFVFIIT) traverse the membrane as a helical segment. Cys456 lines the heme pocket.

Belongs to the cytochrome P450 family. The cofactor is heme.

The protein resides in the membrane. Functionally, catalyzes the epoxidation of physiological unsaturated fatty acids in vitro. Can use laurate, oleate, linoleate, linolenate and vernolate as substrate. In Arabidopsis thaliana (Mouse-ear cress), this protein is Cytochrome P450 77A4 (CYP77A4).